We begin with the raw amino-acid sequence, 92 residues long: FMRFamide-like neuropeptides 5 (92 aa).

Residues 1–41 constitute a propeptide that is removed on maturation; that stretch reads MSSRSTTIAFLFIATLLVFQCVSAQSSAEDADYLEKYQRIA. A phenylalanine amide mark is found at Phe51 and Phe61. Residues 64 to 82 constitute a propeptide that is removed on maturation; the sequence is SRNTWEDGYASPSVNELYV. A Phenylalanine amide modification is found at Phe91.

This sequence belongs to the FARP (FMRFamide related peptide) family. As to expression, each flp gene is expressed in a distinct set of neurons. Flp-5 is expressed in the ASE sensory neurons, the 14 and M4 cholinergic pharyngeal motoneurons, and the PVT and RMG neurons. It is weakly expressed in the PB and 12 neurons. Also expressed in pharyngeal muscle.

The protein resides in the secreted. FMRFamides and FMRFamide-like peptides are neuropeptides. GAKFIRF-amide has an excitatory effect on dissected pharyngeal myogenic muscle system. The chain is FMRFamide-like neuropeptides 5 from Caenorhabditis elegans.